Here is a 2202-residue protein sequence, read N- to C-terminus: Nonribosomal peptide synthetase 5 (2202 aa).

The interval 58–443 (TYAQLDALSD…LLSYDKVDSA (386 aa)) is adenylation 1. Residues 517-593 (ERGLGAVESV…NIAAAVVELS (77 aa)) enclose the Carrier 1 domain. O-(pantetheine 4'-phosphoryl)serine is present on Ser-554. The segment at 625–918 (IAPMTDMQTR…INTLPLAINT (294 aa)) is condensation 1. Residues 1105-1482 (TYREFGRMTE…EVQSTISKLA (378 aa)) form an adenylation 2 region. The Carrier 2 domain maps to 1563 to 1643 (DLETDTQRVL…DLSLAIDELV (81 aa)). The residue at position 1602 (Ser-1602) is an O-(pantetheine 4'-phosphoryl)serine. A condensation 2 region spans residues 1664–1952 (GQLPLSYLEK…FLDRLLLRIQ (289 aa)). Residues 2103–2129 (PVGLTPSHEGSAELTNGTNKTDSTTGQ) are disordered. Residues 2115 to 2129 (ELTNGTNKTDSTTGQ) are compositionally biased toward polar residues. A Carrier 3 domain is found at 2130-2202 (QELENNLTDV…LELATCAVII (73 aa)). O-(pantetheine 4'-phosphoryl)serine is present on Ser-2164.

This sequence belongs to the NRP synthetase family.

Its function is as follows. Nonribosomal peptide synthesis (NRPS) is a key mechanism responsible for the biosynthesis of bioactive metabolites which are potentially contributing to organismal virulence. The protein is Nonribosomal peptide synthetase 5 (NRPS5) of Aspergillus fumigatus (strain ATCC MYA-4609 / CBS 101355 / FGSC A1100 / Af293) (Neosartorya fumigata).